A 235-amino-acid polypeptide reads, in one-letter code: Transmembrane protein 215 (235 aa).

2 helical membrane-spanning segments follow: residues 12–32 (LVVA…VSGM) and 40–60 (IPLL…IALA). The tract at residues 99 to 146 (SDLESGKGSSDELAKKAGLRGKQLPQGPGEVPMASSVTTPTPTEEGEC) is disordered.

It localises to the membrane. This is Transmembrane protein 215 (Tmem215) from Mus musculus (Mouse).